The sequence spans 506 residues: Parthenolide synthase (506 aa).

Residues 10–30 (LFLPTLCTILISYIIIKYVLI) traverse the membrane as a helical segment. 5 N-linked (GlcNAc...) asparagine glycosylation sites follow: asparagine 32, asparagine 63, asparagine 121, asparagine 168, and asparagine 175. The helical transmembrane segment at 301–321 (LLLNVLLGAIDTTFTTIVWAM) threads the bilayer. Heme is bound at residue cysteine 448.

Belongs to the cytochrome P450 family.

It is found in the membrane. The enzyme catalyses (+)-costunolide + reduced [NADPH--hemoprotein reductase] + O2 = parthenolide + oxidized [NADPH--hemoprotein reductase] + H2O + H(+). Its pathway is secondary metabolite biosynthesis; terpenoid biosynthesis. In terms of biological role, involved in the biosynthesis of germacrene-derived sesquiterpene lactones. Component of the parthenolide biosynthetic pathway; parthenolide and conjugates are promising anti-cancer drugs highly active against colon cancer cells. Catalyzes the conversion of costunolide to parthenolide. This Tanacetum parthenium (Feverfew) protein is Parthenolide synthase.